Here is a 982-residue protein sequence, read N- to C-terminus: E3 ubiquitin-protein ligase CBL-B (982 aa).

Residues 35–167 (PPKQAAADRR…KAIFPNGQFQ (133 aa)) form a 4H region. The Cbl-PTB domain maps to 35–343 (PPKQAAADRR…GRSYNPDLTG (309 aa)). The segment at 168-240 (GDNFRITKAD…FEFDIFTRLF (73 aa)) is EF-hand-like. Residues D221, T223, N225, Y227, and E232 each contribute to the Ca(2+) site. The tract at residues 241 to 343 (QPWGSILRNW…GRSYNPDLTG (103 aa)) is SH2-like. Residue S282 is modified to Phosphoserine; by PKC/PRKCQ. R286 serves as a coordination point for 4-O-phospho-L-tyrosine. Residues 344-372 (LCEPTPHDHIKVTQEQYELYCEMGSTFQL) are linker. The residue at position 363 (Y363) is a Phosphotyrosine. The RING-type zinc finger occupies 373 to 412 (CKICAENDKDVKIEPCGHLMCTSCLTAWQESDGQGCPFCR). Positions 466–571 (NVRKCTDRQN…PPPIPPDNRL (106 aa)) are disordered. Over residues 473–486 (RQNSPVTSPGSSPL) the composition is skewed to polar residues. Residues S476, S480, S484, S521, S525, and S529 each carry the phosphoserine modification. The interval 543 to 568 (PLPAPPPPLRDPPPPPPERPPPIPPD) is interaction with VAV1. A compositionally biased stretch (pro residues) spans 544–567 (LPAPPPPLRDPPPPPPERPPPIPP). The residue at position 634 (S634) is a Phosphoserine. Phosphotyrosine is present on residues Y665 and Y709. Disordered stretches follow at residues 688–731 (GPLA…NVKP) and 769–929 (FDSA…EAAL). Over residues 715–725 (HPVSLNSQPSH) the composition is skewed to polar residues. Residues 819–828 (PSLPPPPPPA) are compositionally biased toward pro residues. Low complexity predominate over residues 838–848 (PPGSSSRPSSG). Polar residues predominate over residues 880–899 (VKTNRTSQDYDQLPSCSDGS). Y889 is subject to Phosphotyrosine. The interaction with SH3KBP1 stretch occupies residues 891–927 (QLPSCSDGSQAPARPPKPRPRRTAPEIHHRKPHGPEA). Basic residues predominate over residues 906-922 (PKPRPRRTAPEIHHRKP). The UBA domain maps to 931–970 (NVDAKIAKLMGEGYAFEEVKRALEIAQNNVEVARSILREF).

As to quaternary structure, interacts with SH3 domain-containing proteins LCK, CRK and SORBS1. Interacts with LCP2 and ZAP70. Interacts with CBL. Interacts with SH3 domain-containing proteins VAV1, FYN, FGR, PLCG1, GRB2, CRKL, PIK3R1 and SH3KBP1/CIN85. Identified in heterotrimeric complexes with SH3KBP1/CIN85, CD2AP and ARHGEF7, where one CBLB peptide binds two copies of the other protein. Interacts with poly-ubiquitinated proteins. Dimerization is required for the binding of poly-ubiquitin, but not for the binding of mono-ubiquitin. Interacts with EGFR (phosphorylated). Interacts with IFT20. Post-translationally, phosphorylated on tyrosine and serine residues upon TCR or BCR activation, and upon various types of cell stimulation. In terms of processing, auto-ubiquitinated upon EGF-mediated cell activation or upon T-cell costimulation by CD28; which promotes proteasomal degradation. In terms of tissue distribution, expressed in placenta, heart, lung, kidney, spleen, ovary and testis, as well as fetal brain and liver and hematopoietic cell lines, but not in adult brain, liver, pancreas, salivary gland, or skeletal muscle. Present in lymphocytes (at protein level).

It localises to the cytoplasm. The enzyme catalyses S-ubiquitinyl-[E2 ubiquitin-conjugating enzyme]-L-cysteine + [acceptor protein]-L-lysine = [E2 ubiquitin-conjugating enzyme]-L-cysteine + N(6)-ubiquitinyl-[acceptor protein]-L-lysine.. Its pathway is protein modification; protein ubiquitination. In terms of biological role, E3 ubiquitin-protein ligase which accepts ubiquitin from specific E2 ubiquitin-conjugating enzymes, and transfers it to substrates, generally promoting their degradation by the proteasome. Negatively regulates TCR (T-cell receptor), BCR (B-cell receptor) and FCER1 (high affinity immunoglobulin epsilon receptor) signal transduction pathways. In naive T-cells, inhibits VAV1 activation upon TCR engagement and imposes a requirement for CD28 costimulation for proliferation and IL-2 production. Also acts by promoting PIK3R1/p85 ubiquitination, which impairs its recruitment to the TCR and subsequent activation. In activated T-cells, inhibits PLCG1 activation and calcium mobilization upon restimulation and promotes anergy. In B-cells, acts by ubiquitinating SYK and promoting its proteasomal degradation. Slightly promotes SRC ubiquitination. May be involved in EGFR ubiquitination and internalization. May be functionally coupled with the E2 ubiquitin-protein ligase UB2D3. In association with CBL, required for proper feedback inhibition of ciliary platelet-derived growth factor receptor-alpha (PDGFRA) signaling pathway via ubiquitination and internalization of PDGFRA. The protein is E3 ubiquitin-protein ligase CBL-B (CBLB) of Homo sapiens (Human).